The primary structure comprises 269 residues: Uncharacterised methyltransferase MT1546 (269 aa).

It belongs to the methyltransferase superfamily.

This chain is Uncharacterised methyltransferase MT1546, found in Mycobacterium tuberculosis (strain CDC 1551 / Oshkosh).